A 77-amino-acid polypeptide reads, in one-letter code: Homeodomain-only protein (77 aa).

The segment at residues 7–65 (AALGVRLTEDQVKVLEENFTKVSKHPDETTLMLIAAECGLSEEQTAVWFRMRNAQWRKA) is a DNA-binding region (homeobox; degenerate).

It is found in the nucleus. Its subcellular location is the cytoplasm. Functionally, atypical homeodomain protein which does not bind DNA and is required to modulate cardiac growth and development. May act via an interaction with SRF, leading to modulate the expression of SRF-dependent cardiac-specific genes and cardiac development. May act as a co-chaperone for HSPA1A and HSPA1B chaperone proteins and assist in chaperone-mediated protein refolding. This Danio rerio (Zebrafish) protein is Homeodomain-only protein (hopx).